The chain runs to 196 residues: Pyridoxal 5'-phosphate synthase subunit PdxT (196 aa).

47 to 49 (GES) is an L-glutamine binding site. C79 acts as the Nucleophile in catalysis. L-glutamine contacts are provided by residues R106 and 134 to 135 (IR). Residues H170 and E172 each act as charge relay system in the active site.

This sequence belongs to the glutaminase PdxT/SNO family. In the presence of PdxS, forms a dodecamer of heterodimers. Only shows activity in the heterodimer.

It carries out the reaction aldehydo-D-ribose 5-phosphate + D-glyceraldehyde 3-phosphate + L-glutamine = pyridoxal 5'-phosphate + L-glutamate + phosphate + 3 H2O + H(+). The enzyme catalyses L-glutamine + H2O = L-glutamate + NH4(+). It functions in the pathway cofactor biosynthesis; pyridoxal 5'-phosphate biosynthesis. Its function is as follows. Catalyzes the hydrolysis of glutamine to glutamate and ammonia as part of the biosynthesis of pyridoxal 5'-phosphate. The resulting ammonia molecule is channeled to the active site of PdxS. The sequence is that of Pyridoxal 5'-phosphate synthase subunit PdxT from Bacillus licheniformis (strain ATCC 14580 / DSM 13 / JCM 2505 / CCUG 7422 / NBRC 12200 / NCIMB 9375 / NCTC 10341 / NRRL NRS-1264 / Gibson 46).